The sequence spans 226 residues: MKLCVALDLSTKEECLQLAKELKNLDIWLKVGLRAYLRDGFKFIEELKKVDDFKIFLDLKIHDIPNTMADACEEISKLGVDMINIHASAGKIAMQEVMTRLSKFSKRPLVLAVSALTSFDEENFFSIYRQKIEEAVINFSKISYENGLDGMVCSVFESKIIKEHTQRNFLTLTPGIRPFGEKNDDQKRVANLTMARENLSDFIVVGRPIYKDNNPRKICEKILQEI.

Substrate is bound by residues Asp8, Lys30, 58-67 (DLKIHDIPNT), Thr117, Arg177, Gln186, Gly206, and Arg207. Lys60 serves as the catalytic Proton donor.

The protein belongs to the OMP decarboxylase family. Type 1 subfamily. In terms of assembly, homodimer.

It carries out the reaction orotidine 5'-phosphate + H(+) = UMP + CO2. The protein operates within pyrimidine metabolism; UMP biosynthesis via de novo pathway; UMP from orotate: step 2/2. In terms of biological role, catalyzes the decarboxylation of orotidine 5'-monophosphate (OMP) to uridine 5'-monophosphate (UMP). In Campylobacter jejuni subsp. jejuni serotype O:6 (strain 81116 / NCTC 11828), this protein is Orotidine 5'-phosphate decarboxylase.